The primary structure comprises 92 residues: Putative protein IntG (92 aa).

It belongs to the 'phage' integrase family.

This is Putative protein IntG (intG) from Escherichia coli (strain K12).